Reading from the N-terminus, the 356-residue chain is Mannonate dehydratase (356 aa).

Belongs to the mannonate dehydratase family. The cofactor is Fe(2+). It depends on Mn(2+) as a cofactor.

The enzyme catalyses D-mannonate = 2-dehydro-3-deoxy-D-gluconate + H2O. It participates in carbohydrate metabolism; pentose and glucuronate interconversion. Functionally, catalyzes the dehydration of D-mannonate. This is Mannonate dehydratase from Levilactobacillus brevis (strain ATCC 367 / BCRC 12310 / CIP 105137 / JCM 1170 / LMG 11437 / NCIMB 947 / NCTC 947) (Lactobacillus brevis).